The chain runs to 381 residues: Cobalt-precorrin-5B C(1)-methyltransferase (381 aa).

This sequence belongs to the CbiD family.

It catalyses the reaction Co-precorrin-5B + S-adenosyl-L-methionine = Co-precorrin-6A + S-adenosyl-L-homocysteine. Its pathway is cofactor biosynthesis; adenosylcobalamin biosynthesis; cob(II)yrinate a,c-diamide from sirohydrochlorin (anaerobic route): step 6/10. Catalyzes the methylation of C-1 in cobalt-precorrin-5B to form cobalt-precorrin-6A. In Clostridium botulinum (strain Alaska E43 / Type E3), this protein is Cobalt-precorrin-5B C(1)-methyltransferase.